A 251-amino-acid polypeptide reads, in one-letter code: Triosephosphate isomerase (251 aa).

9 to 11 (NWK) contributes to the substrate binding site. Catalysis depends on His-94, which acts as the Electrophile. The active-site Proton acceptor is the Glu-166. Substrate is bound by residues Gly-172, Ser-211, and 232 to 233 (GG).

Belongs to the triosephosphate isomerase family. In terms of assembly, homodimer.

The protein localises to the cytoplasm. It catalyses the reaction D-glyceraldehyde 3-phosphate = dihydroxyacetone phosphate. The protein operates within carbohydrate biosynthesis; gluconeogenesis. It functions in the pathway carbohydrate degradation; glycolysis; D-glyceraldehyde 3-phosphate from glycerone phosphate: step 1/1. In terms of biological role, involved in the gluconeogenesis. Catalyzes stereospecifically the conversion of dihydroxyacetone phosphate (DHAP) to D-glyceraldehyde-3-phosphate (G3P). In Stenotrophomonas maltophilia (strain K279a), this protein is Triosephosphate isomerase.